The chain runs to 129 residues: MRKIYATGKRKTAIAKVWLTPGKGELSINEQSLNQWLGGHEAIKMKVMQPLLLTKQEQSVDIKAVVFGGGYSAQAEALRHGISKALNAYDIAFRAILKPKGLLTRDSRVVERKKYGKRKARRSPQFSKR.

Belongs to the universal ribosomal protein uS9 family.

The sequence is that of Small ribosomal subunit protein uS9 (rpsI) from Helicobacter pylori (strain J99 / ATCC 700824) (Campylobacter pylori J99).